A 235-amino-acid polypeptide reads, in one-letter code: Pathogen-related protein (235 aa).

In Hordeum vulgare (Barley), this protein is Pathogen-related protein.